The chain runs to 1274 residues: Myosin-1 (1274 aa).

Residues 1–28 (MAPSKKAGKKGAVGGFLSGASKPQKVQK) are disordered. Positions 41–721 (AGVPDMTLLS…TLFYLEGERD (681 aa)) constitute a Myosin motor domain. ATP is bound at residue 134 to 141 (GESGAGKT). Position 363 is a phosphoserine (Ser363). Residues 410–492 (VIGVLDIYGF…AGIFATLNDA (83 aa)) form an actin-binding region. 2 IQ domains span residues 725 to 745 (HTMA…KHEA) and 746 to 771 (ATKI…YGHQ). The TH1 domain occupies 779 to 969 (RRRFSLLGMR…TIQVGSGEPP (191 aa)). Disordered regions lie at residues 951-1029 (RGDA…PVVT), 1042-1071 (ARAP…PKEF), and 1116-1248 (PSNY…QVAQ). The span at 957–974 (KSHTIQVGSGEPPNSLSN) shows a compositional bias: polar residues. Over residues 1042-1053 (ARAPPSIPGRAA) the composition is skewed to low complexity. Composition is skewed to pro residues over residues 1054–1067 (APPP…PAGP) and 1126–1138 (APPP…PPSR). The 59-residue stretch at 1067 to 1125 (PPKEFYKALYNFTGQEGEMNLVKGEEVEVKEKDDNGWWMVVKNGQEGWAPSNYLKKVEQ) folds into the SH3 domain. 2 stretches are compositionally biased toward low complexity: residues 1139–1157 (PVAA…PAVT) and 1170–1226 (AASA…IGGK).

Belongs to the TRAFAC class myosin-kinesin ATPase superfamily. Myosin family. Post-translationally, phosphorylation of the TEDS site (Ser-363) is required for the polarization of the actin cytoskeleton. Phosphorylation probably activates the myosin-I ATPase activity.

It localises to the cytoplasm. The protein localises to the cytoskeleton. It is found in the actin patch. Its function is as follows. Type-I myosin implicated in the organization of the actin cytoskeleton. Required for proper actin cytoskeleton polarization. At the cell cortex, assembles in patch-like structures together with proteins from the actin-polymerizing machinery and promotes actin assembly. Functions as actin nucleation-promoting factor (NPF) for the Arp2/3 complex. This is Myosin-1 (MYO1) from Cryptococcus neoformans var. neoformans serotype D (strain B-3501A) (Filobasidiella neoformans).